The chain runs to 150 residues: Large ribosomal subunit protein uL13 (150 aa).

This sequence belongs to the universal ribosomal protein uL13 family. In terms of assembly, part of the 50S ribosomal subunit.

Functionally, this protein is one of the early assembly proteins of the 50S ribosomal subunit, although it is not seen to bind rRNA by itself. It is important during the early stages of 50S assembly. This Mesoplasma florum (strain ATCC 33453 / NBRC 100688 / NCTC 11704 / L1) (Acholeplasma florum) protein is Large ribosomal subunit protein uL13.